A 504-amino-acid polypeptide reads, in one-letter code: Xylose import ATP-binding protein XylG (504 aa).

ABC transporter domains lie at 6 to 243 (LEMQ…VGRE) and 262 to 504 (VRNF…TGGK). Position 38 to 45 (38 to 45 (GENGAGKS)) interacts with ATP.

Belongs to the ABC transporter superfamily. Xylose importer (TC 3.A.1.2.4) family. As to quaternary structure, the complex is composed of two ATP-binding proteins (XylG), two transmembrane proteins (XylH) and a solute-binding protein (XylF).

It is found in the cell membrane. It carries out the reaction D-xylose(out) + ATP + H2O = D-xylose(in) + ADP + phosphate + H(+). In terms of biological role, part of the ABC transporter complex XylFGH involved in xylose import. Responsible for energy coupling to the transport system. The polypeptide is Xylose import ATP-binding protein XylG (Moorella thermoacetica (strain ATCC 39073 / JCM 9320)).